A 716-amino-acid chain; its full sequence is Epidermal growth factor receptor kinase substrate 8-like protein 2 (716 aa).

Disordered regions lie at residues 1–25 (MSQSGTMSCCPGATNGSLGRSDGVA) and 182–243 (PQTL…SQEE). Residues 46-202 (MHETSQYHVQ…RQRQSILPPP (157 aa)) enclose the PID domain. A compositionally biased stretch (pro residues) spans 199-208 (LPPPQGPAPI). Over residues 234–243 (GFRRRESQEE) the composition is skewed to basic and acidic residues. Ser-240 bears the Phosphoserine mark. Thr-304 is subject to Phosphothreonine. A disordered region spans residues 449-488 (VSPVSRQSIRNSQKHSPTSEPTPPGDALPPVSSPHTHRGY). Residue Ser-450 is modified to Phosphoserine. Residues 452-467 (VSRQSIRNSQKHSPTS) are compositionally biased toward polar residues. Thr-470 bears the Phosphothreonine mark. The region spanning 493–552 (AMAKYVKILYDFTARNANELSVLKDEVLEVLEDGRQWWKLRSRSGQAGYVPCNILGEARP) is the SH3 domain. Position 571 is a phosphoserine (Ser-571).

It belongs to the EPS8 family. In terms of assembly, interacts with ABI1. Part of a complex that contains SOS1, ABI1 and EPS8L2. Associates with F-actin.

It localises to the cytoplasm. It is found in the cell projection. The protein resides in the stereocilium. In terms of biological role, stimulates guanine exchange activity of SOS1. May play a role in membrane ruffling and remodeling of the actin cytoskeleton. In the cochlea, is required for stereocilia maintenance in adult hair cells. The polypeptide is Epidermal growth factor receptor kinase substrate 8-like protein 2 (EPS8L2) (Pongo abelii (Sumatran orangutan)).